A 365-amino-acid chain; its full sequence is IgG receptor FcRn large subunit p51 (365 aa).

Residues 1 to 23 form the signal peptide; sequence MGVPRPQPWALGLLLFLLPGSLG. Positions 24-110 are alpha-1; it reads AESHLSLLYH…AFKALGGKGP (87 aa). At 24–297 the chain is on the extracellular side; sequence AESHLSLLYH…VELESPAKSS (274 aa). The alpha-2 stretch occupies residues 111 to 200; sequence YTLQGLLGCE…ERGRGNLEWK (90 aa). 2 disulfide bridges follow: C119/C182 and C221/C275. An N-linked (GlcNAc...) asparagine glycan is attached at N125. An alpha-3 region spans residues 201 to 290; that stretch reads EPPSMRLKAR…GLAQPLRVEL (90 aa). Residues 202 to 289 enclose the Ig-like C1-type domain; the sequence is PPSMRLKARP…AGLAQPLRVE (88 aa). The segment at 291 to 297 is connecting peptide; the sequence is ESPAKSS. Residues 298 to 321 form a helical membrane-spanning segment; it reads VLVVGIVIGVLLLTAAAVGGALLW. Residues 322–365 lie on the Cytoplasmic side of the membrane; that stretch reads RRMRSGLPAPWISLRGDDTGVLLPTPGEAQDADLKDVNVIPATA. At S334 the chain carries Phosphoserine.

This sequence belongs to the immunoglobulin superfamily. As to quaternary structure, fcRn complex consists of two subunits: p51, and p14 which is equivalent to beta-2-microglobulin. It forms an MHC class I-like heterodimer. Interacts with albumin/ALB; this interaction regulates ALB homeostasis. In terms of assembly, (Microbial infection) Interacts with Echovirus 6, Echovirus 11 and Echovirus 30 capsid protein VP1. Expressed in full-term placenta, heart, lung, liver, muscle, kidney, pancreas, and both fetal and adult small intestine.

It localises to the cell membrane. The protein resides in the endosome membrane. Cell surface receptor that transfers passive humoral immunity from the mother to the newborn. Binds to the Fc region of monomeric immunoglobulin gamma and mediates its selective uptake from milk. IgG in the milk is bound at the apical surface of the intestinal epithelium. The resultant FcRn-IgG complexes are transcytosed across the intestinal epithelium and IgG is released from FcRn into blood or tissue fluids. Throughout life, contributes to effective humoral immunity by recycling IgG and extending its half-life in the circulation. Mechanistically, monomeric IgG binding to FcRn in acidic endosomes of endothelial and hematopoietic cells recycles IgG to the cell surface where it is released into the circulation. In addition of IgG, regulates homeostasis of the other most abundant circulating protein albumin/ALB. Functionally, (Microbial infection) Acts as an uncoating receptor for a panel of echoviruses including Echovirus 5, 6, 7, 9, 11, 13, 25 and 29. This chain is IgG receptor FcRn large subunit p51 (FCGRT), found in Homo sapiens (Human).